Here is a 99-residue protein sequence, read N- to C-terminus: Phosphoribosyl-ATP pyrophosphatase (99 aa).

Belongs to the PRA-PH family.

The protein localises to the cytoplasm. The enzyme catalyses 1-(5-phospho-beta-D-ribosyl)-ATP + H2O = 1-(5-phospho-beta-D-ribosyl)-5'-AMP + diphosphate + H(+). It participates in amino-acid biosynthesis; L-histidine biosynthesis; L-histidine from 5-phospho-alpha-D-ribose 1-diphosphate: step 2/9. The sequence is that of Phosphoribosyl-ATP pyrophosphatase from Methanococcoides burtonii (strain DSM 6242 / NBRC 107633 / OCM 468 / ACE-M).